We begin with the raw amino-acid sequence, 179 residues long: MAREGLGLEITELRLGLSCGEPKKNEKKRMFSEIDGGVEENGGSGDRKSVDKKNQVVGWPPVCSYRKKNMNEGSKMYMKVSMDGAPYLRKIDLCLHKGYLELALALEKLFDCCGIEEALKDAENCEHVPIYEDKDGDWMLVGDVPWEMFIESCKRLRIMKRSDAKGFDLQPKGSLKRFI.

The EAR-like (transcriptional repression) motif lies at 13–17 (LRLGL). The interval 31-52 (FSEIDGGVEENGGSGDRKSVDK) is disordered. The PB1 domain occupies 75–163 (KMYMKVSMDG…KRLRIMKRSD (89 aa)).

Belongs to the Aux/IAA family. Homodimers and heterodimers.

The protein localises to the nucleus. In terms of biological role, aux/IAA proteins are short-lived transcriptional factors that function as repressors of early auxin response genes at low auxin concentrations. Repression is thought to result from the interaction with auxin response factors (ARFs), proteins that bind to the auxin-responsive promoter element (AuxRE). Formation of heterodimers with ARF proteins may alter their ability to modulate early auxin response genes expression. In Pisum sativum (Garden pea), this protein is Auxin-induced protein IAA6 (IAA6).